We begin with the raw amino-acid sequence, 453 residues long: Allantoinase (453 aa).

6 residues coordinate Zn(2+): histidine 59, histidine 61, lysine 146, histidine 186, histidine 242, and aspartate 315. The residue at position 146 (lysine 146) is an N6-carboxylysine.

Belongs to the metallo-dependent hydrolases superfamily. Allantoinase family. In terms of assembly, homotetramer. Zn(2+) serves as cofactor. Carboxylation allows a single lysine to coordinate two zinc ions.

It catalyses the reaction (S)-allantoin + H2O = allantoate + H(+). Its pathway is nitrogen metabolism; (S)-allantoin degradation; allantoate from (S)-allantoin: step 1/1. Catalyzes the conversion of allantoin (5-ureidohydantoin) to allantoic acid by hydrolytic cleavage of the five-member hydantoin ring. This is Allantoinase from Escherichia coli (strain SMS-3-5 / SECEC).